Consider the following 223-residue polypeptide: Deoxyribose-phosphate aldolase 2 (223 aa).

Residue Asp-92 is the Proton donor/acceptor of the active site. Residue Lys-154 is the Schiff-base intermediate with acetaldehyde of the active site. Lys-183 acts as the Proton donor/acceptor in catalysis.

This sequence belongs to the DeoC/FbaB aldolase family. DeoC type 1 subfamily.

It localises to the cytoplasm. The catalysed reaction is 2-deoxy-D-ribose 5-phosphate = D-glyceraldehyde 3-phosphate + acetaldehyde. It participates in carbohydrate degradation; 2-deoxy-D-ribose 1-phosphate degradation; D-glyceraldehyde 3-phosphate and acetaldehyde from 2-deoxy-alpha-D-ribose 1-phosphate: step 2/2. Functionally, catalyzes a reversible aldol reaction between acetaldehyde and D-glyceraldehyde 3-phosphate to generate 2-deoxy-D-ribose 5-phosphate. The chain is Deoxyribose-phosphate aldolase 2 from Oceanobacillus iheyensis (strain DSM 14371 / CIP 107618 / JCM 11309 / KCTC 3954 / HTE831).